A 1097-amino-acid polypeptide reads, in one-letter code: Cyclin-T (1097 aa).

3 disordered regions span residues 319 to 782 (SNIT…SNGI), 804 to 936 (LLKP…SLQA), and 985 to 1097 (AAPV…YNKK). Positions 332 to 350 (DSRDRDRDRERERERERDP) are enriched in basic and acidic residues. Low complexity-rich tracts occupy residues 373–390 (SSSV…SSSS), 420–456 (PSSH…GRPS), 467–478 (GMPPVGVGMPPH), and 489–511 (PQQP…SGMS). The segment covering 580 to 591 (LPYSQSQSYGHM) has biased composition (polar residues). Positions 592–606 (QQQPVPQSQQQQMPP) are enriched in low complexity. Residues 609–620 (SQHSLQSKNSLF) show a composition bias toward polar residues. The segment covering 652-675 (HDYKLNSHPRDKESPKKERLTPTK) has biased composition (basic and acidic residues). Residues 687–698 (GSGNSSSGSGSS) are compositionally biased toward low complexity. Positions 860 to 870 (GEIKEESSSKS) are enriched in basic and acidic residues. The segment covering 871 to 883 (EKKKKKDKHKHKE) has biased composition (basic residues). The span at 884 to 895 (KDKSKDKTEKEE) shows a compositional bias: basic and acidic residues. Ser-916 carries the phosphoserine modification. Over residues 993–1007 (GAGGGGYSSSGGSSS) the composition is skewed to gly residues. Basic and acidic residues predominate over residues 1016 to 1031 (SDRDRDKESKKNKSQD). Positions 1037 to 1050 (GAGGGIFNPLGGAG) are enriched in gly residues. Positions 1087–1097 (APPPMPVYNKK) are enriched in pro residues.

The protein belongs to the cyclin family. Cyclin C subfamily. In terms of assembly, component of the super elongation complex (SEC), at least composed of Ell, Cdk9, cyclin-T (CycT), lilli and ear. Associates with CDK9 to form P-TEFb.

It is found in the nucleus. Its function is as follows. Regulatory subunit of the cyclin-dependent kinase pair (CDK9/cyclin T) complex, also called positive transcription elongation factor B (P-TEFb), which is proposed to facilitate the transition from abortive to production elongation by phosphorylating the CTD (carboxy-terminal domain) of the large subunit of RNA polymerase II (RNAP II). This Drosophila melanogaster (Fruit fly) protein is Cyclin-T (CycT).